The sequence spans 103 residues: Large ribosomal subunit protein bL21 (103 aa).

Belongs to the bacterial ribosomal protein bL21 family. In terms of assembly, part of the 50S ribosomal subunit. Contacts protein L20.

Its function is as follows. This protein binds to 23S rRNA in the presence of protein L20. The chain is Large ribosomal subunit protein bL21 from Herminiimonas arsenicoxydans.